Here is a 325-residue protein sequence, read N- to C-terminus: Phosphate acyltransferase (325 aa).

Belongs to the PlsX family. Homodimer. Probably interacts with PlsY.

It localises to the cytoplasm. It carries out the reaction a fatty acyl-[ACP] + phosphate = an acyl phosphate + holo-[ACP]. Its pathway is lipid metabolism; phospholipid metabolism. Catalyzes the reversible formation of acyl-phosphate (acyl-PO(4)) from acyl-[acyl-carrier-protein] (acyl-ACP). This enzyme utilizes acyl-ACP as fatty acyl donor, but not acyl-CoA. The sequence is that of Phosphate acyltransferase from Staphylococcus epidermidis (strain ATCC 35984 / DSM 28319 / BCRC 17069 / CCUG 31568 / BM 3577 / RP62A).